Consider the following 169-residue polypeptide: Putative cysteine protease YraA (169 aa).

Residues 3 to 169 (KKIAVLVTDQ…FNRESLNLLK (167 aa)) form the PfpI endopeptidase domain. The active-site Nucleophile is the Cys103. His104 is a catalytic residue.

Belongs to the peptidase C56 family.

Functionally, functions in the protection against aldehyde-stress, possibly by degrading damaged proteins. The chain is Putative cysteine protease YraA (yraA) from Bacillus subtilis (strain 168).